The sequence spans 184 residues: MSSNSINVEARAELAELIKELAVVHGEVTLSSGKKADYYIDVRRATLHARASRLIGQLLREATADWDYDAVGGLTLGADPVATAIMHADGRDINAFVVRKEAKKHGMQRRIEGPDLTGKKVLVVEDTTTTGNSPLTAVAALREAGIEVVGVATVVDRATGADEVIAAEGLPYRSLLGLSDLGLN.

Residues arginine 99, lysine 100, lysine 103, histidine 105, and glutamate 125–serine 133 each bind 5-phospho-alpha-D-ribose 1-diphosphate. Positions 129 and 157 each coordinate orotate.

This sequence belongs to the purine/pyrimidine phosphoribosyltransferase family. PyrE subfamily. In terms of assembly, homodimer. Mg(2+) is required as a cofactor.

The catalysed reaction is orotidine 5'-phosphate + diphosphate = orotate + 5-phospho-alpha-D-ribose 1-diphosphate. Its pathway is pyrimidine metabolism; UMP biosynthesis via de novo pathway; UMP from orotate: step 1/2. Its function is as follows. Catalyzes the transfer of a ribosyl phosphate group from 5-phosphoribose 1-diphosphate to orotate, leading to the formation of orotidine monophosphate (OMP). The chain is Orotate phosphoribosyltransferase from Corynebacterium glutamicum (strain R).